Here is a 266-residue protein sequence, read N- to C-terminus: Phosphatidylserine decarboxylase proenzyme (266 aa).

Residues D74, H135, and S237 each act as charge relay system; for autoendoproteolytic cleavage activity in the active site. Residue S237 is the Schiff-base intermediate with substrate; via pyruvic acid; for decarboxylase activity of the active site. S237 bears the Pyruvic acid (Ser); by autocatalysis mark.

This sequence belongs to the phosphatidylserine decarboxylase family. PSD-B subfamily. Prokaryotic type I sub-subfamily. In terms of assembly, heterodimer of a large membrane-associated beta subunit and a small pyruvoyl-containing alpha subunit. Pyruvate serves as cofactor. In terms of processing, is synthesized initially as an inactive proenzyme. Formation of the active enzyme involves a self-maturation process in which the active site pyruvoyl group is generated from an internal serine residue via an autocatalytic post-translational modification. Two non-identical subunits are generated from the proenzyme in this reaction, and the pyruvate is formed at the N-terminus of the alpha chain, which is derived from the carboxyl end of the proenzyme. The autoendoproteolytic cleavage occurs by a canonical serine protease mechanism, in which the side chain hydroxyl group of the serine supplies its oxygen atom to form the C-terminus of the beta chain, while the remainder of the serine residue undergoes an oxidative deamination to produce ammonia and the pyruvoyl prosthetic group on the alpha chain. During this reaction, the Ser that is part of the protease active site of the proenzyme becomes the pyruvoyl prosthetic group, which constitutes an essential element of the active site of the mature decarboxylase.

The protein localises to the cell membrane. It catalyses the reaction a 1,2-diacyl-sn-glycero-3-phospho-L-serine + H(+) = a 1,2-diacyl-sn-glycero-3-phosphoethanolamine + CO2. It participates in phospholipid metabolism; phosphatidylethanolamine biosynthesis; phosphatidylethanolamine from CDP-diacylglycerol: step 2/2. Functionally, catalyzes the formation of phosphatidylethanolamine (PtdEtn) from phosphatidylserine (PtdSer). In Campylobacter jejuni subsp. jejuni serotype O:2 (strain ATCC 700819 / NCTC 11168), this protein is Phosphatidylserine decarboxylase proenzyme.